The sequence spans 188 residues: Small ribosomal subunit protein uS7 (188 aa).

It belongs to the universal ribosomal protein uS7 family. As to quaternary structure, part of the 30S ribosomal subunit.

Its function is as follows. One of the primary rRNA binding proteins, it binds directly to 16S rRNA where it nucleates assembly of the head domain of the 30S subunit. Is located at the subunit interface close to the decoding center. This is Small ribosomal subunit protein uS7 from Methanococcus maripaludis (strain C7 / ATCC BAA-1331).